Consider the following 310-residue polypeptide: Deoxyribonuclease gamma (310 aa).

Positions 1 to 25 (MSLYPASPYLASLLLFILALHGALS) are cleaved as a signal peptide. The Bipartite nuclear localization signal motif lies at 40-56 (KKENHNAMDIIVKIIKR). Residues Glu105 and His160 contribute to the active site. The cysteines at positions 199 and 236 are disulfide-linked. The segment at 289–310 (SRAFTNSRKSVSLKKKKKGSRS) is not required for free DNA-nuclease activity but required for activity towards liposome-coated DNA. The Nuclear localization signal signature appears at 301–307 (LKKKKKG).

Belongs to the DNase I family. In terms of assembly, monomer. Ca(2+) serves as cofactor. Mg(2+) is required as a cofactor. Post-translationally, seems to be synthesized as an inactive precursor protein and converted into an active mature enzyme by removal of the N-terminal precursor peptide during apoptosis. Poly-ADP-ribosylated by PARP1. ADP-ribosylation negatively regulates enzymatic activity during apoptosis. Detected at high levels in spleen, lymph nodes, thymus and liver. Observed also in kidney and testis, but not in brain or heart.

It localises to the nucleus. It is found in the secreted. With respect to regulation, inhibited by zinc. In terms of biological role, has DNA hydrolytic activity. Is capable of both single- and double-stranded DNA cleavage, producing DNA fragments with 3'-OH ends. Can cleave chromatin to nucleosomal units and cleaves nucleosomal and liposome-coated DNA. Acts in internucleosomal DNA fragmentation (INDF) during apoptosis and necrosis. The role in apoptosis includes myogenic and neuronal differentiation, and BCR-mediated clonal deletion of self-reactive B cells. Is active on chromatin in apoptotic cell-derived membrane-coated microparticles and thus suppresses anti-DNA autoimmunity. Together with DNASE1, plays a key role in degrading neutrophil extracellular traps (NETs). NETs are mainly composed of DNA fibers and are released by neutrophils to bind pathogens during inflammation. Degradation of intravascular NETs by DNASE1 and DNASE1L3 is required to prevent formation of clots that obstruct blood vessels and cause organ damage following inflammation. The polypeptide is Deoxyribonuclease gamma (Dnase1l3) (Rattus norvegicus (Rat)).